A 141-amino-acid chain; its full sequence is Large ribosomal subunit protein uL11 (141 aa).

Belongs to the universal ribosomal protein uL11 family. Part of the ribosomal stalk of the 50S ribosomal subunit. Interacts with L10 and the large rRNA to form the base of the stalk. L10 forms an elongated spine to which L12 dimers bind in a sequential fashion forming a multimeric L10(L12)X complex. In terms of processing, one or more lysine residues are methylated.

In terms of biological role, forms part of the ribosomal stalk which helps the ribosome interact with GTP-bound translation factors. In Coprothermobacter proteolyticus (strain ATCC 35245 / DSM 5265 / OCM 4 / BT), this protein is Large ribosomal subunit protein uL11.